The following is a 581-amino-acid chain: Putative carboxypeptidase YOL153C (581 aa).

Residues 1-29 (MTETHHAPLPDVYPSSKQPTSSTYSKCKK) are Cytoplasmic-facing. Lys-17 is covalently cross-linked (Glycyl lysine isopeptide (Lys-Gly) (interchain with G-Cter in ubiquitin)). Residues 30–46 (FGLPLIGLLTLLLAYIS) traverse the membrane as a helical; Signal-anchor for type II membrane protein segment. The Extracellular portion of the chain corresponds to 47–581 (SFTKPVPNST…IVNVNEYGHD (535 aa)). N-linked (GlcNAc...) asparagine glycosylation is found at Asn-54 and Asn-76. His-170 serves as a coordination point for Zn(2+). Asp-172 is a catalytic residue. Asp-207 provides a ligand contact to Zn(2+). Catalysis depends on Glu-241, which acts as the Proton acceptor. Positions 242 and 270 each coordinate Zn(2+). 2 N-linked (GlcNAc...) asparagine glycosylation sites follow: Asn-335 and Asn-428. His-550 contacts Zn(2+).

Belongs to the peptidase M20A family. It depends on Zn(2+) as a cofactor.

Its subcellular location is the membrane. The sequence is that of Putative carboxypeptidase YOL153C from Saccharomyces cerevisiae (strain ATCC 204508 / S288c) (Baker's yeast).